We begin with the raw amino-acid sequence, 206 residues long: Imidazole glycerol phosphate synthase subunit hisH (206 aa).

The Glutamine amidotransferase type-1 domain maps to 2-206; it reads KVGLVDYSMG…REVMKKAASL (205 aa). C80 acts as the Nucleophile in catalysis. Catalysis depends on residues H184 and E186.

As to quaternary structure, heterodimer of hisH and hisF.

It localises to the plastid. The protein resides in the chloroplast. The enzyme catalyses 5-[(5-phospho-1-deoxy-D-ribulos-1-ylimino)methylamino]-1-(5-phospho-beta-D-ribosyl)imidazole-4-carboxamide + L-glutamine = D-erythro-1-(imidazol-4-yl)glycerol 3-phosphate + 5-amino-1-(5-phospho-beta-D-ribosyl)imidazole-4-carboxamide + L-glutamate + H(+). It carries out the reaction L-glutamine + H2O = L-glutamate + NH4(+). The protein operates within amino-acid biosynthesis; L-histidine biosynthesis; L-histidine from 5-phospho-alpha-D-ribose 1-diphosphate: step 5/9. Functionally, IGPS catalyzes the conversion of PRFAR and glutamine to IGP, AICAR and glutamate. The HisH subunit catalyzes the hydrolysis of glutamine to glutamate and ammonia as part of the synthesis of IGP and AICAR. The resulting ammonia molecule is channeled to the active site of HisF. This is Imidazole glycerol phosphate synthase subunit hisH from Cyanidioschyzon merolae (strain NIES-3377 / 10D) (Unicellular red alga).